The primary structure comprises 278 residues: UPF0750 membrane protein YxkD (278 aa).

5 helical membrane-spanning segments follow: residues 8-28, 46-66, 77-97, 101-121, and 145-165; these read VLML…FAIP, LFQW…LLIG, YTII…GWSI, ELII…GMII, and ISYA…FIIG.

It belongs to the UPF0750 family.

It is found in the cell membrane. The chain is UPF0750 membrane protein YxkD (yxkD) from Bacillus subtilis (strain 168).